Reading from the N-terminus, the 100-residue chain is Replication restart protein PriB (100 aa).

An SSB domain is found at 1–100 (MTNRMELSGT…VLHADDIIHI (100 aa)).

This sequence belongs to the PriB family. As to quaternary structure, homodimer. Interacts with PriA and DnaT. Component of the replication restart primosome. Primosome assembly occurs via a 'hand-off' mechanism. PriA binds to replication forks, subsequently PriB then DnaT bind; DnaT then displaces ssDNA to generate the helicase loading substrate.

Its function is as follows. Involved in the restart of stalled replication forks, which reloads the replicative helicase on sites other than the origin of replication; the PriA-PriB pathway is the major replication restart pathway. During primosome assembly it facilitates complex formation between PriA and DnaT on DNA; stabilizes PriA on DNA. Stimulates the DNA unwinding activity of PriA helicase. This chain is Replication restart protein PriB, found in Vibrio vulnificus (strain CMCP6).